The sequence spans 248 residues: NADP-dependent 3-hydroxy acid dehydrogenase YdfG (248 aa).

NADP(+)-binding positions include 7 to 12 (GATAGF), 32 to 33 (RR), 54 to 55 (DV), and Asn-81. Ser-134 contributes to the substrate binding site. Residues Tyr-147, Lys-151, and 177–185 (PGLVGGTEF) contribute to the NADP(+) site. Tyr-147 serves as the catalytic Proton acceptor.

It belongs to the short-chain dehydrogenases/reductases (SDR) family. In terms of assembly, homotetramer.

It catalyses the reaction 3-hydroxypropanoate + NADP(+) = 3-oxopropanoate + NADPH + H(+). The catalysed reaction is L-allo-threonine + NADP(+) = aminoacetone + CO2 + NADPH. In terms of biological role, NADP-dependent dehydrogenase with broad substrate specificity acting on 3-hydroxy acids. Catalyzes the NADP-dependent oxidation of L-allo-threonine to L-2-amino-3-keto-butyrate, which is spontaneously decarboxylated into aminoacetone. Also acts on D-threonine, L-serine, D-serine, D-3-hydroxyisobutyrate, L-3-hydroxyisobutyrate, D-glycerate and L-glycerate. Able to catalyze the reduction of the malonic semialdehyde to 3-hydroxypropionic acid. YdfG is apparently supplementing RutE, the presumed malonic semialdehyde reductase involved in pyrimidine degradation since both are able to detoxify malonic semialdehyde. The sequence is that of NADP-dependent 3-hydroxy acid dehydrogenase YdfG from Shigella flexneri.